The chain runs to 111 residues: Aspartate 1-decarboxylase (111 aa).

Ser25 (schiff-base intermediate with substrate; via pyruvic acid) is an active-site residue. Ser25 bears the Pyruvic acid (Ser) mark. Thr57 is a binding site for substrate. Tyr58 serves as the catalytic Proton donor. Residue 73–75 (GPA) participates in substrate binding.

The protein belongs to the PanD family. Heterooctamer of four alpha and four beta subunits. The cofactor is pyruvate. Post-translationally, is synthesized initially as an inactive proenzyme, which is activated by self-cleavage at a specific serine bond to produce a beta-subunit with a hydroxyl group at its C-terminus and an alpha-subunit with a pyruvoyl group at its N-terminus.

The protein localises to the cytoplasm. The catalysed reaction is L-aspartate + H(+) = beta-alanine + CO2. It participates in cofactor biosynthesis; (R)-pantothenate biosynthesis; beta-alanine from L-aspartate: step 1/1. Catalyzes the pyruvoyl-dependent decarboxylation of aspartate to produce beta-alanine. The protein is Aspartate 1-decarboxylase of Francisella tularensis subsp. novicida (strain U112).